Reading from the N-terminus, the 252-residue chain is Triosephosphate isomerase (252 aa).

8 to 10 (NWK) contributes to the substrate binding site. The active-site Electrophile is histidine 95. The active-site Proton acceptor is the glutamate 167. Substrate-binding positions include glycine 173, serine 212, and 233-234 (GG).

The protein belongs to the triosephosphate isomerase family. In terms of assembly, homodimer.

It is found in the cytoplasm. The enzyme catalyses D-glyceraldehyde 3-phosphate = dihydroxyacetone phosphate. Its pathway is carbohydrate biosynthesis; gluconeogenesis. The protein operates within carbohydrate degradation; glycolysis; D-glyceraldehyde 3-phosphate from glycerone phosphate: step 1/1. Its function is as follows. Involved in the gluconeogenesis. Catalyzes stereospecifically the conversion of dihydroxyacetone phosphate (DHAP) to D-glyceraldehyde-3-phosphate (G3P). The sequence is that of Triosephosphate isomerase from Lawsonia intracellularis (strain PHE/MN1-00).